Consider the following 173-residue polypeptide: NADH-ubiquinone oxidoreductase chain 6 (173 aa).

Helical transmembrane passes span 12 to 32 (VFWL…VSLV), 47 to 67 (GSFL…VIFA), 94 to 114 (VVLA…GECG), and 142 to 162 (GALM…LVLV).

The protein belongs to the complex I subunit 6 family.

It is found in the mitochondrion membrane. The enzyme catalyses a ubiquinone + NADH + 5 H(+)(in) = a ubiquinol + NAD(+) + 4 H(+)(out). Its function is as follows. Core subunit of the mitochondrial membrane respiratory chain NADH dehydrogenase (Complex I) that is believed to belong to the minimal assembly required for catalysis. Complex I functions in the transfer of electrons from NADH to the respiratory chain. The immediate electron acceptor for the enzyme is believed to be ubiquinone. The chain is NADH-ubiquinone oxidoreductase chain 6 (MT-ND6) from Pelomedusa subrufa (African side-necked turtle).